The primary structure comprises 178 residues: FANCD2 opposite strand protein (178 aa).

The chain is FANCD2 opposite strand protein (Fancd2os) from Mus musculus (Mouse).